The following is a 74-amino-acid chain: Putative defensin-like protein 186 (74 aa).

The first 22 residues, 1-22 (MKNSSIILVLVFFFFISSSGEA), serve as a signal peptide directing secretion. Intrachain disulfides connect Cys-25-Cys-74, Cys-31-Cys-51, Cys-37-Cys-68, and Cys-41-Cys-70.

The protein belongs to the DEFL family.

It localises to the secreted. This is Putative defensin-like protein 186 (LCR40) from Arabidopsis thaliana (Mouse-ear cress).